Reading from the N-terminus, the 122-residue chain is MEGKPLLTSKQKTAVVCGVPTQVVCTAFSSHILVVVTQLGKMGTLVSLEPSSVTSDVGKPVLTTKVLLGKDEPLVHVFAKNLVAFVSQEAGNRAVLLALATKDKSMEAVKALQEVIQACQVW.

Methionine 1 is modified (N-acetylmethionine).

This sequence belongs to the PSMG3 family. In terms of assembly, homodimer. Interacts with PSMG4. Interacts directly with alpha and beta subunits of the 20S proteasome but dissociates before the formation of half-proteasomes, probably upon recruitment of POMP.

Its function is as follows. Chaperone protein which promotes assembly of the 20S proteasome. May cooperate with PSMG1-PSMG2 heterodimers to orchestrate the correct assembly of proteasomes. This chain is Proteasome assembly chaperone 3 (PSMG3), found in Bos taurus (Bovine).